The sequence spans 154 residues: Protein X (154 aa).

Residues 68–117 (PCALRFTSARCMETTVNAHQILPKVLHKRTLGLPAMSTTDLEAYFKDCVF) are mitochondrial targeting sequence.

It belongs to the orthohepadnavirus protein X family. May form homodimer. May interact with host CEBPA, CFLAR, CREB1, DDB1, E4F1, HBXIP, HSPD1/HSP60, NFKBIA, POLR2E and SMAD4. Interacts with host SMC5-SMC6 complex and induces its degradation. Interacts with host TRPC4AP; leading to prevent ubiquitination of TRPC4AP. Interacts with host PLSCR1; this interaction promotes ubiquitination and degradation of HBx and impairs HBx-mediated cell proliferation. In terms of processing, a fraction may be phosphorylated in insect cells and HepG2 cells, a human hepatoblastoma cell line. Phosphorylated in vitro by host protein kinase C or mitogen-activated protein kinase. N-acetylated in insect cells.

Its subcellular location is the host cytoplasm. It is found in the host nucleus. The protein localises to the host mitochondrion. Functionally, multifunctional protein that plays a role in silencing host antiviral defenses and promoting viral transcription. Does not seem to be essential for HBV infection. May be directly involved in development of cirrhosis and liver cancer (hepatocellular carcinoma). Most of cytosolic activities involve modulation of cytosolic calcium. The effect on apoptosis is controversial depending on the cell types in which the studies have been conducted. May induce apoptosis by localizing in mitochondria and causing loss of mitochondrial membrane potential. May also modulate apoptosis by binding host CFLAR, a key regulator of the death-inducing signaling complex (DISC). Promotes viral transcription by using the host E3 ubiquitin ligase DDB1 to target the SMC5-SMC6 complex to proteasomal degradation. This host complex would otherwise bind to viral episomal DNA, and prevents its transcription. Moderately stimulates transcription of many different viral and cellular transcription elements. Promoters and enhancers stimulated by HBx contain DNA binding sites for NF-kappa-B, AP-1, AP-2, c-EBP, ATF/CREB, or the calcium-activated factor NF-AT. The protein is Protein X of Hepatitis B virus genotype A2 subtype adw2 (strain Rutter 1979) (HBV-A).